A 369-amino-acid polypeptide reads, in one-letter code: Glutamate 5-kinase (369 aa).

An ATP-binding site is contributed by Lys-10. Substrate contacts are provided by Ser-50, Asp-137, and Asn-149. Residues 169–170 and 210–216 each bind ATP; these read TD and TGGMVTK. The PUA domain maps to 276 to 349; the sequence is EGSIFIDEGA…GKHSEEMLAT (74 aa).

It belongs to the glutamate 5-kinase family.

It is found in the cytoplasm. It carries out the reaction L-glutamate + ATP = L-glutamyl 5-phosphate + ADP. Its pathway is amino-acid biosynthesis; L-proline biosynthesis; L-glutamate 5-semialdehyde from L-glutamate: step 1/2. In terms of biological role, catalyzes the transfer of a phosphate group to glutamate to form L-glutamate 5-phosphate. In Desulfitobacterium hafniense (strain Y51), this protein is Glutamate 5-kinase.